Here is a 37-residue protein sequence, read N- to C-terminus: Bactericidin B-2 (37 aa).

Position 37 is a glycine amide (glycine 37).

The protein belongs to the cecropin family.

It is found in the secreted. Functionally, cecropins have lytic and antibacterial activity against several Gram-positive and Gram-negative bacteria. This is Bactericidin B-2 from Manduca sexta (Tobacco hawkmoth).